A 231-amino-acid polypeptide reads, in one-letter code: Transmembrane protein 225 (231 aa).

Topologically, residues 1 to 13 (MVHILVRKVEATN) are cytoplasmic. Residues 14 to 34 (MFFSSWTLVFLAVGIIIEEWA) form a helical membrane-spanning segment. Residues 35–67 (ELKLGPQKPTITHSPWICCTPLWPSDGLEVIRN) are Extracellular-facing. The chain crosses the membrane as a helical span at residues 68–88 (ILIVVLSLSFMHNLLLGFEFT). Topologically, residues 89–97 (YMIPQTKYT) are cytoplasmic. The chain crosses the membrane as a helical span at residues 98–118 (LIMTACLAFLTGILLLGALLL). The Extracellular portion of the chain corresponds to 119-135 (YHHMLRQGESVYYSSYK). A helical membrane pass occupies residues 136–156 (ISWIIFTAYLNVLFLFISGFL). Topologically, residues 157 to 231 (SLLQYKQPID…IQARRVTWAL (75 aa)) are cytoplasmic. An RVxF motif is present at residues 225–229 (RRVTW).

In terms of assembly, interacts (via RVxF motif) with PPP1CC.

It localises to the cytoplasmic vesicle. The protein resides in the secretory vesicle. The protein localises to the acrosome membrane. Probably inhibits protein phosphatase 1 (PP1) in sperm via binding to catalytic subunit PPP1CC. The sequence is that of Transmembrane protein 225 (TMEM225) from Bos taurus (Bovine).